The chain runs to 307 residues: Methionyl-tRNA formyltransferase (307 aa).

(6S)-5,6,7,8-tetrahydrofolate is bound at residue 108-111 (SLLP).

This sequence belongs to the Fmt family.

It catalyses the reaction L-methionyl-tRNA(fMet) + (6R)-10-formyltetrahydrofolate = N-formyl-L-methionyl-tRNA(fMet) + (6S)-5,6,7,8-tetrahydrofolate + H(+). Its function is as follows. Attaches a formyl group to the free amino group of methionyl-tRNA(fMet). The formyl group appears to play a dual role in the initiator identity of N-formylmethionyl-tRNA by promoting its recognition by IF2 and preventing the misappropriation of this tRNA by the elongation apparatus. This is Methionyl-tRNA formyltransferase from Renibacterium salmoninarum (strain ATCC 33209 / DSM 20767 / JCM 11484 / NBRC 15589 / NCIMB 2235).